Here is a 235-residue protein sequence, read N- to C-terminus: 1-(5-phosphoribosyl)-5-[(5-phosphoribosylamino)methylideneamino] imidazole-4-carboxamide isomerase (235 aa).

Catalysis depends on aspartate 8, which acts as the Proton acceptor. Residue aspartate 128 is the Proton donor of the active site.

This sequence belongs to the HisA/HisF family.

Its subcellular location is the cytoplasm. The enzyme catalyses 1-(5-phospho-beta-D-ribosyl)-5-[(5-phospho-beta-D-ribosylamino)methylideneamino]imidazole-4-carboxamide = 5-[(5-phospho-1-deoxy-D-ribulos-1-ylimino)methylamino]-1-(5-phospho-beta-D-ribosyl)imidazole-4-carboxamide. The protein operates within amino-acid biosynthesis; L-histidine biosynthesis; L-histidine from 5-phospho-alpha-D-ribose 1-diphosphate: step 4/9. This is 1-(5-phosphoribosyl)-5-[(5-phosphoribosylamino)methylideneamino] imidazole-4-carboxamide isomerase from Thermus thermophilus (strain ATCC 27634 / DSM 579 / HB8).